We begin with the raw amino-acid sequence, 310 residues long: N-acetyl-gamma-glutamyl-phosphate reductase (310 aa).

The active site involves Cys117.

The protein belongs to the NAGSA dehydrogenase family. Type 2 subfamily.

The protein localises to the cytoplasm. It carries out the reaction N-acetyl-L-glutamate 5-semialdehyde + phosphate + NADP(+) = N-acetyl-L-glutamyl 5-phosphate + NADPH + H(+). The protein operates within amino-acid biosynthesis; L-arginine biosynthesis; N(2)-acetyl-L-ornithine from L-glutamate: step 3/4. Functionally, catalyzes the NADPH-dependent reduction of N-acetyl-5-glutamyl phosphate to yield N-acetyl-L-glutamate 5-semialdehyde. The sequence is that of N-acetyl-gamma-glutamyl-phosphate reductase from Brucella ovis (strain ATCC 25840 / 63/290 / NCTC 10512).